Reading from the N-terminus, the 476-residue chain is Hyaluronidase-2 (476 aa).

A signal peptide spans 1-20 (MWTGLGPAVTLALVLVVAWA). Intrachain disulfides connect C47–C343 and C214–C230. 2 N-linked (GlcNAc...) asparagine glycosylation sites follow: N77 and N106. E138 functions as the Proton donor in the catalytic mechanism. N340 and N360 each carry an N-linked (GlcNAc...) asparagine glycan. In terms of domain architecture, EGF-like spans 364–442 (AAQYCSWAQC…YLGWGGEQCQ (79 aa)). Cystine bridges form between C368/C379, C373/C430, and C432/C441. G451 is lipidated: GPI-anchor amidated glycine. Residues 452-476 (ASGAWAGSHLTGLLAVAVLAFTWTS) constitute a propeptide, removed in mature form.

The protein belongs to the glycosyl hydrolase 56 family. In terms of assembly, interacts with MST1R. (Microbial infection) Interacts with Jaagsiekte sheep retrovirus (JSRV) envelope proteins.

It is found in the cell membrane. It carries out the reaction Random hydrolysis of (1-&gt;4)-linkages between N-acetyl-beta-D-glucosamine and D-glucuronate residues in hyaluronate.. Functionally, catalyzes hyaluronan degradation into small fragments that are endocytosed and degraded in lysosomes by HYAL1 and exoglycosidases. Essential for the breakdown of extracellular matrix hyaluronan. The protein is Hyaluronidase-2 (HYAL2) of Ovis aries (Sheep).